The following is a 107-amino-acid chain: Nucleoid-associated protein GbCGDNIH1_0260 (107 aa).

It belongs to the YbaB/EbfC family. As to quaternary structure, homodimer.

The protein localises to the cytoplasm. Its subcellular location is the nucleoid. In terms of biological role, binds to DNA and alters its conformation. May be involved in regulation of gene expression, nucleoid organization and DNA protection. The sequence is that of Nucleoid-associated protein GbCGDNIH1_0260 from Granulibacter bethesdensis (strain ATCC BAA-1260 / CGDNIH1).